The primary structure comprises 305 residues: tRNA-cytidine(32) 2-sulfurtransferase (305 aa).

The segment at 1 to 20 (MTAVLPLPQPLADPAPRDPR) is disordered. The short motif at 59-64 (SGGKDS) is the PP-loop motif element. [4Fe-4S] cluster-binding residues include C134, C137, and C225. A compositionally biased stretch (low complexity) spans 282 to 293 (DAPSDVDPDPSA). Positions 282–305 (DAPSDVDPDPSAWLSASHAPHDSD) are disordered.

This sequence belongs to the TtcA family. Homodimer. The cofactor is Mg(2+). [4Fe-4S] cluster is required as a cofactor.

The protein resides in the cytoplasm. It carries out the reaction cytidine(32) in tRNA + S-sulfanyl-L-cysteinyl-[cysteine desulfurase] + AH2 + ATP = 2-thiocytidine(32) in tRNA + L-cysteinyl-[cysteine desulfurase] + A + AMP + diphosphate + H(+). The protein operates within tRNA modification. Functionally, catalyzes the ATP-dependent 2-thiolation of cytidine in position 32 of tRNA, to form 2-thiocytidine (s(2)C32). The sulfur atoms are provided by the cysteine/cysteine desulfurase (IscS) system. The polypeptide is tRNA-cytidine(32) 2-sulfurtransferase (Xanthomonas euvesicatoria pv. vesicatoria (strain 85-10) (Xanthomonas campestris pv. vesicatoria)).